The sequence spans 251 residues: MRRPLVAGNWKMHGTHSSVADLIKGLRQLALPSGVDVAVMPPCLFISQVVQGLAGKAIGVGAQNSAVEPMQGALTGEIAPSQLADAGCGMVLVGHSERRLILGESDEVVSRKFAAAQSCGLVPVLCVGETRAEREAGKTLEVVARQLGSVIDELGVGAFARAVVAYEPVWAIGTGLTASPAQAQEVHAAIRAQLAAENAEVAKGVRLLYGGSVKAASAAELFGMPDIDGGLVGGASLNADEFGAICRAAGS.

Asparagine 9–lysine 11 is a substrate binding site. Residue histidine 95 is the Electrophile of the active site. The active-site Proton acceptor is the glutamate 167. Residues glycine 173, serine 212, and glycine 233–glycine 234 contribute to the substrate site.

This sequence belongs to the triosephosphate isomerase family. In terms of assembly, homodimer.

It localises to the cytoplasm. It catalyses the reaction D-glyceraldehyde 3-phosphate = dihydroxyacetone phosphate. It participates in carbohydrate biosynthesis; gluconeogenesis. Its pathway is carbohydrate degradation; glycolysis; D-glyceraldehyde 3-phosphate from glycerone phosphate: step 1/1. Functionally, involved in the gluconeogenesis. Catalyzes stereospecifically the conversion of dihydroxyacetone phosphate (DHAP) to D-glyceraldehyde-3-phosphate (G3P). The protein is Triosephosphate isomerase of Pseudomonas paraeruginosa (strain DSM 24068 / PA7) (Pseudomonas aeruginosa (strain PA7)).